The sequence spans 947 residues: Probable outer membrane protein pmp19 (947 aa).

Residues 1 to 19 (MKQMRLWGFLFLSSFCQVS) form the signal peptide. The Autotransporter domain maps to 672 to 947 (IPLQHLCVFG…NAHAGLSLSF (276 aa)).

Belongs to the PMP outer membrane protein family.

It is found in the secreted. It localises to the cell wall. The protein localises to the cell outer membrane. In Chlamydia pneumoniae (Chlamydophila pneumoniae), this protein is Probable outer membrane protein pmp19 (pmp19).